Here is a 274-residue protein sequence, read N- to C-terminus: Mitochondrial S-adenosylmethionine carrier protein (274 aa).

3 Solcar repeats span residues 4–77, 86–168, and 177–265; these read PGFV…VKWF, LTPM…LKAL, and VDSW…THSL. 6 consecutive transmembrane segments (helical) span residues 5–25, 49–69, 85–105, 142–162, 182–202, and 238–258; these read GFVA…LILF, IYAG…AFFI, YLTP…ACLI, RGYK…FPLW, SAVC…PLDV, and FAGV…FLGA.

Belongs to the mitochondrial carrier (TC 2.A.29) family. As to expression, widely expressed. Highly expressed in testis, with moderate expression in brain, heart, kidney, lung, skeletal muscle, pancreas, small intestine and liver, and low expression in spleen.

The protein resides in the mitochondrion inner membrane. It carries out the reaction S-adenosyl-L-homocysteine(out) + S-adenosyl-L-methionine(in) = S-adenosyl-L-homocysteine(in) + S-adenosyl-L-methionine(out). With respect to regulation, strongly inhibited by tannic acid and Bromocresol Purple. Mitochondrial S-adenosyl-L-methionine/S-adenosyl-L-homocysteine antiporter. Mediates the exchange of cytosolic S-adenosyl-L-methionine, the predominant methyl-group donor for macromolecule methylation processes, for mitochondrial S-adenosylhomocysteine(SAH), a by-product of methylation reactions. This chain is Mitochondrial S-adenosylmethionine carrier protein, found in Homo sapiens (Human).